The chain runs to 247 residues: 3-oxoacyl-[acyl-carrier-protein] reductase MabA (247 aa).

Residues 25–27 (RGI), Arg-47, 61–62 (DV), Gly-90, Tyr-153, Lys-157, Ile-186, and Arg-197 each bind NADP(+). Tyr-153 serves as the catalytic Proton acceptor.

The protein belongs to the short-chain dehydrogenases/reductases (SDR) family. Homotetramer.

Its subcellular location is the secreted. It localises to the cell wall. The catalysed reaction is a (3R)-hydroxyacyl-[ACP] + NADP(+) = a 3-oxoacyl-[ACP] + NADPH + H(+). Its pathway is lipid metabolism; mycolic acid biosynthesis. Part of the mycobacterial fatty acid elongation system FAS-II, which is involved in mycolic acid biosynthesis. Catalyzes the NADPH-dependent reduction of beta-ketoacyl derivatives, the second step of the FAS-II elongation cycle. This chain is 3-oxoacyl-[acyl-carrier-protein] reductase MabA, found in Mycobacterium bovis (strain ATCC BAA-935 / AF2122/97).